Consider the following 198-residue polypeptide: Dephospho-CoA kinase (198 aa).

The DPCK domain occupies Arg4–Trp198. Ala12–Ser17 is an ATP binding site.

It belongs to the CoaE family.

The protein localises to the cytoplasm. It catalyses the reaction 3'-dephospho-CoA + ATP = ADP + CoA + H(+). It functions in the pathway cofactor biosynthesis; coenzyme A biosynthesis; CoA from (R)-pantothenate: step 5/5. Catalyzes the phosphorylation of the 3'-hydroxyl group of dephosphocoenzyme A to form coenzyme A. The sequence is that of Dephospho-CoA kinase from Parasynechococcus marenigrum (strain WH8102).